The chain runs to 449 residues: 3-phosphoshikimate 1-carboxyvinyltransferase (449 aa).

Residues 1–23 (MSHSASPKPATARRSEALTGEIR) are disordered. Residues lysine 28, serine 29, and arginine 33 each coordinate 3-phosphoshikimate. A phosphoenolpyruvate-binding site is contributed by lysine 28. Residues glycine 100 and arginine 128 each contribute to the phosphoenolpyruvate site. The 3-phosphoshikimate site is built by serine 173, glutamine 175, aspartate 326, and lysine 353. Glutamine 175 provides a ligand contact to phosphoenolpyruvate. The Proton acceptor role is filled by aspartate 326. Residues arginine 357 and arginine 402 each contribute to the phosphoenolpyruvate site.

This sequence belongs to the EPSP synthase family. As to quaternary structure, monomer.

The protein resides in the cytoplasm. The enzyme catalyses 3-phosphoshikimate + phosphoenolpyruvate = 5-O-(1-carboxyvinyl)-3-phosphoshikimate + phosphate. It participates in metabolic intermediate biosynthesis; chorismate biosynthesis; chorismate from D-erythrose 4-phosphate and phosphoenolpyruvate: step 6/7. In terms of biological role, catalyzes the transfer of the enolpyruvyl moiety of phosphoenolpyruvate (PEP) to the 5-hydroxyl of shikimate-3-phosphate (S3P) to produce enolpyruvyl shikimate-3-phosphate and inorganic phosphate. In Pseudomonas sp. (strain PG2982), this protein is 3-phosphoshikimate 1-carboxyvinyltransferase.